The primary structure comprises 484 residues: UDP-N-acetylmuramoyl-L-alanyl-D-glutamate--2,6-diaminopimelate ligase (484 aa).

S30 serves as a coordination point for UDP-N-acetyl-alpha-D-muramoyl-L-alanyl-D-glutamate. Residue 111–117 (GTNGKTT) participates in ATP binding. UDP-N-acetyl-alpha-D-muramoyl-L-alanyl-D-glutamate-binding positions include 153 to 154 (TT), S180, Q186, and R188. K220 carries the post-translational modification N6-carboxylysine. Residues R378, 402 to 405 (DNPR), G455, and E459 each bind meso-2,6-diaminopimelate. A Meso-diaminopimelate recognition motif motif is present at residues 402 to 405 (DNPR).

This sequence belongs to the MurCDEF family. MurE subfamily. Mg(2+) serves as cofactor. Post-translationally, carboxylation is probably crucial for Mg(2+) binding and, consequently, for the gamma-phosphate positioning of ATP.

Its subcellular location is the cytoplasm. It carries out the reaction UDP-N-acetyl-alpha-D-muramoyl-L-alanyl-D-glutamate + meso-2,6-diaminopimelate + ATP = UDP-N-acetyl-alpha-D-muramoyl-L-alanyl-gamma-D-glutamyl-meso-2,6-diaminopimelate + ADP + phosphate + H(+). It functions in the pathway cell wall biogenesis; peptidoglycan biosynthesis. Its function is as follows. Catalyzes the addition of meso-diaminopimelic acid to the nucleotide precursor UDP-N-acetylmuramoyl-L-alanyl-D-glutamate (UMAG) in the biosynthesis of bacterial cell-wall peptidoglycan. In Phocaeicola vulgatus (strain ATCC 8482 / DSM 1447 / JCM 5826 / CCUG 4940 / NBRC 14291 / NCTC 11154) (Bacteroides vulgatus), this protein is UDP-N-acetylmuramoyl-L-alanyl-D-glutamate--2,6-diaminopimelate ligase.